Reading from the N-terminus, the 528-residue chain is Peptide chain release factor 3 (528 aa).

Residues Asp10–Gln278 form the tr-type G domain. GTP contacts are provided by residues Ser19–Thr26, Asp87–His91, and Asn141–Asp144.

The protein belongs to the TRAFAC class translation factor GTPase superfamily. Classic translation factor GTPase family. PrfC subfamily.

Its subcellular location is the cytoplasm. Increases the formation of ribosomal termination complexes and stimulates activities of RF-1 and RF-2. It binds guanine nucleotides and has strong preference for UGA stop codons. It may interact directly with the ribosome. The stimulation of RF-1 and RF-2 is significantly reduced by GTP and GDP, but not by GMP. The protein is Peptide chain release factor 3 of Oleidesulfovibrio alaskensis (strain ATCC BAA-1058 / DSM 17464 / G20) (Desulfovibrio alaskensis).